A 268-amino-acid chain; its full sequence is Homeobox protein CDX-1 (268 aa).

A disordered region spans residues 1–152; sequence MYVGYVLDKD…AGGGGSGKTR (152 aa). Composition is skewed to pro residues over residues 29–42 and 54–67; these read TYAP…PPQY and APAP…PFPA. Positions 73–91 are enriched in low complexity; that stretch reads AAAYGPGPTASAASPAPLA. The segment covering 92-108 has biased composition (pro residues); that stretch reads FGPPPDFSPVPAPPGPG. Over residues 115–128 the composition is skewed to low complexity; that stretch reads SLGAPGAPSSPGAP. A DNA-binding region (homeobox) is located at residues 154–213; that stretch reads KDKYRVVYTDHQRLELEKEFHYSRYITIRRKSELAANLGLTERQVKIWFQNRRAKERKVN. Residues 157-178 form an interaction with DNA region; that stretch reads YRVVYTDHQRLELEKEFHYSRY. The tract at residues 196–207 is interaction with 5-mCpG DNA; it reads RQVKIWFQNRRA. The tract at residues 209–268 is disordered; sequence ERKVNKKKQQQQQPLPPTQLPLPLDGTPTPSGPPLGSLCPTNAGLLGTPSPVPVKEEFLP. Positions 229-246 are enriched in low complexity; sequence PLPLDGTPTPSGPPLGSL.

It belongs to the Caudal homeobox family. Intestinal epithelium.

The protein localises to the nucleus. Its function is as follows. Plays a role in transcriptional regulation. Involved in activated KRAS-mediated transcriptional activation of PRKD1 in colorectal cancer (CRC) cells. Binds to the PRKD1 promoter in colorectal cancer (CRC) cells. Could play a role in the terminal differentiation of the intestine. Binds preferentially to methylated DNA. The protein is Homeobox protein CDX-1 (Cdx1) of Mus musculus (Mouse).